Consider the following 415-residue polypeptide: Cell wall mannoprotein PIR3 (415 aa).

An N-terminal signal peptide occupies residues 1–18 (MQYKKPLVVSALAATSLA). Residues 19–67 (AYAPKDPWSTLTPSATYKGGITDYSSSFGIAIEAVATSASSVASSKAKR) constitute a propeptide that is removed on maturation. 13 PIR1/2/3 repeats span residues 66–84 (KRAA…TTTA), 92–109 (AAAV…AKST), 110–127 (AAAA…AKST), 128–145 (AAAV…AKST), 146–163 (AAAV…AKST), 164–181 (AAAV…AKST), 182–199 (AAAV…AKST), 200–217 (AAAA…AKST), 218–235 (AAAA…AKST), 236–253 (AAAA…AKST), 254–271 (AAAA…TTST), 272–288 (KAAA…ASKT), and 289–307 (TSGA…AEVK).

Belongs to the PIR protein family. Covalently linked to beta-1,3-glucan of the inner cell wall layer via an alkali-sensitive ester linkage between the gamma-carboxyl group of glutamic acids, arising from specific glutamines within the PIR1/2/3 repeats, and hydroxyl groups of glucoses of beta-1,3-glucan chains. In terms of processing, O-glycosylated. Extensively O-mannosylated.

The protein resides in the secreted. It localises to the cell wall. Component of the outer cell wall layer. Required for stability of the cell wall and for optimal growth. Required for resistance against several antifungal and cell wall-perturbing agents. The chain is Cell wall mannoprotein PIR3 (PIR3) from Saccharomyces cerevisiae (strain YJM789) (Baker's yeast).